A 753-amino-acid chain; its full sequence is 5-methyltetrahydropteroyltriglutamate--homocysteine methyltransferase (753 aa).

5-methyltetrahydropteroyltri-L-glutamate contacts are provided by residues 17-20 and Lys117; that span reads RELK. L-homocysteine contacts are provided by residues 431 to 433 and Glu484; that span reads IGS. L-methionine-binding positions include 431–433 and Glu484; that span reads IGS. Residues 515–516 and Trp561 each bind 5-methyltetrahydropteroyltri-L-glutamate; that span reads RC. Residue Asp599 coordinates L-homocysteine. Asp599 contacts L-methionine. Residue Glu605 participates in 5-methyltetrahydropteroyltri-L-glutamate binding. 3 residues coordinate Zn(2+): His641, Cys643, and Glu665. His694 functions as the Proton donor in the catalytic mechanism. Cys726 contacts Zn(2+).

This sequence belongs to the vitamin-B12 independent methionine synthase family. Zn(2+) serves as cofactor.

The catalysed reaction is 5-methyltetrahydropteroyltri-L-glutamate + L-homocysteine = tetrahydropteroyltri-L-glutamate + L-methionine. Its pathway is amino-acid biosynthesis; L-methionine biosynthesis via de novo pathway; L-methionine from L-homocysteine (MetE route): step 1/1. Catalyzes the transfer of a methyl group from 5-methyltetrahydrofolate to homocysteine resulting in methionine formation. This chain is 5-methyltetrahydropteroyltriglutamate--homocysteine methyltransferase, found in Cronobacter sakazakii (strain ATCC BAA-894) (Enterobacter sakazakii).